The following is a 285-amino-acid chain: ATP synthase gamma chain (285 aa).

The protein belongs to the ATPase gamma chain family. F-type ATPases have 2 components, CF(1) - the catalytic core - and CF(0) - the membrane proton channel. CF(1) has five subunits: alpha(3), beta(3), gamma(1), delta(1), epsilon(1). CF(0) has three main subunits: a, b and c.

It is found in the cell membrane. Functionally, produces ATP from ADP in the presence of a proton gradient across the membrane. The gamma chain is believed to be important in regulating ATPase activity and the flow of protons through the CF(0) complex. In Geobacillus sp. (strain WCH70), this protein is ATP synthase gamma chain.